We begin with the raw amino-acid sequence, 452 residues long: Plasmepsin I (452 aa).

Topologically, residues 1-37 (MALSIKEDFSSAFAKNESAVNSSTFNNNMKTWKIQKR) are cytoplasmic. Residues 1–123 (MALSIKEDFS…TGLTQKPHLG (123 aa)) constitute a propeptide that is removed on maturation. Residues 38-58 (FQILYVFFFLLITGALFYYLI) form a helical; Signal-anchor for type II membrane protein membrane-spanning segment. Topologically, residues 59–452 (DNVLFPKNKK…VGFALAKKKL (394 aa)) are lumenal. Positions 139-446 (YYGEAQIGDN…DYDNHTVGFA (308 aa)) constitute a Peptidase A1 domain. D157 is a catalytic residue. A disulfide bond links C170 and C175. Residue D337 is part of the active site. A disulfide bridge links C372 with C408.

This sequence belongs to the peptidase A1 family. In terms of processing, not N-glycosylated. Proteolytically cleaved into the soluble active mature form in the digestive vacuole by cysteine protease falcipains; the process begins at the early ring stage. Proteolysis requires an acidic environment.

The protein resides in the membrane. It localises to the vacuole lumen. Its subcellular location is the vacuole membrane. It catalyses the reaction Hydrolysis of the 33-Phe-|-Leu-34 bond in the alpha-chain of hemoglobin, leading to denaturation of molecule.. With respect to regulation, inhibited by KNI derived compounds KNI-10333 and to a lesser extent KNI-10743. Its function is as follows. During the asexual blood stage, catalyzes the initial cleavage of native host hemoglobin (Hb) resulting in Hb denaturation; specifically cleaves between Phe-33 and Leu-34 of Hb alpha-chain. Digestion of host Hb is an essential step which provides the parasite with amino acids for protein synthesis, and regulates osmolarity. The sequence is that of Plasmepsin I from Plasmodium falciparum (isolate 3D7).